The sequence spans 338 residues: Glycerol-3-phosphate dehydrogenase [NAD(P)+] (338 aa).

The NADPH site is built by Ser-14, Phe-15, Arg-35, and Lys-109. Sn-glycerol 3-phosphate-binding residues include Lys-109 and Gly-137. Ala-141 serves as a coordination point for NADPH. The sn-glycerol 3-phosphate site is built by Lys-192, Asp-247, Ser-257, Arg-258, and Asn-259. Lys-192 functions as the Proton acceptor in the catalytic mechanism. Arg-258 is an NADPH binding site. NADPH contacts are provided by Leu-282 and Glu-284.

It belongs to the NAD-dependent glycerol-3-phosphate dehydrogenase family.

The protein resides in the cytoplasm. It carries out the reaction sn-glycerol 3-phosphate + NAD(+) = dihydroxyacetone phosphate + NADH + H(+). It catalyses the reaction sn-glycerol 3-phosphate + NADP(+) = dihydroxyacetone phosphate + NADPH + H(+). The protein operates within membrane lipid metabolism; glycerophospholipid metabolism. Functionally, catalyzes the reduction of the glycolytic intermediate dihydroxyacetone phosphate (DHAP) to sn-glycerol 3-phosphate (G3P), the key precursor for phospholipid synthesis. The sequence is that of Glycerol-3-phosphate dehydrogenase [NAD(P)+] from Rickettsia rickettsii (strain Iowa).